Consider the following 54-residue polypeptide: Large ribosomal subunit protein bL33 (54 aa).

Belongs to the bacterial ribosomal protein bL33 family.

The protein is Large ribosomal subunit protein bL33 of Opitutus terrae (strain DSM 11246 / JCM 15787 / PB90-1).